The sequence spans 329 residues: Phospholipid scramblase 4 (329 aa).

Residues 1 to 51 form a disordered region; the sequence is MSGVVPTAPEQPAGEMENQTKPPDPRPDAPPEYNSHFLPGPPGTAVPPPTG. A proline-rich domain (PRD) region spans residues 1–98; the sequence is MSGVVPTAPE…PMPNQSVPIT (98 aa). The Cytoplasmic portion of the chain corresponds to 1–303; sequence MSGVVPTAPE…IHFPLDLDVK (303 aa). The short motif at 18–25 is the SH3-binding 1 element; that stretch reads NQTKPPDP. The short motif at 30 to 33 is the PPxY motif element; that stretch reads PPEY. Pro residues predominate over residues 39-51; that stretch reads PGPPGTAVPPPTG. The SH3-binding 2 motif lies at 41–49; sequence PPGTAVPPP. A phosphotyrosine; by ABL mark is found at Y83 and Y88. Positions 98 to 106 match the SH3-binding 3 motif; it reads TWMPGPTPM. Residues C197, C198, C199, C201, and C202 are each lipidated (S-palmitoyl cysteine). The short motif at 271–283 is the Nuclear localization signal element; sequence NIGSIIRKWNGLL. The helical transmembrane segment at 304-320 threads the bilayer; sequence MKAMIFGACFLIDFMYF. At 321–329 the chain is on the extracellular side; the sequence is ERSPPQRSR.

This sequence belongs to the phospholipid scramblase family. As to quaternary structure, interacts with PDCD6. Interacts with KPNA2; this interaction mediates the nucleus import of PLSCR4. The cofactor is Ca(2+). Mg(2+) serves as cofactor. Requires Zn(2+) as cofactor. As to expression, expressed in heart, brain, placenta, lung, liver, kidney, pancreas, spleen, thymus, prostate, testis, uterus, small intestine and colon. Not detected in peripheral blood lymphocytes.

The protein localises to the cell membrane. It localises to the nucleus. The catalysed reaction is a 1,2-diacyl-sn-glycero-3-phosphocholine(in) = a 1,2-diacyl-sn-glycero-3-phosphocholine(out). It carries out the reaction a 1,2-diacyl-sn-glycero-3-phospho-L-serine(in) = a 1,2-diacyl-sn-glycero-3-phospho-L-serine(out). Its function is as follows. Catalyzes metal ion-induced ATP-independent rapid bidirectional and non-specific movement of phospholipids (lipid scrambling or lipid flip-flop) between the inner and outer leaflet of the plasma membrane and participates in the redistribution of phospholipids between membrane leaflets. Metal ions bind to the calcium-binding site and induce conformation change in the protein. Has a greater affi nity for Ca(2+) than Mg(2+) and Zn(2+). The chain is Phospholipid scramblase 4 from Homo sapiens (Human).